Here is a 373-residue protein sequence, read N- to C-terminus: Putative C-P lyase subunit protein HtxH (373 aa).

It belongs to the PhnI family.

Functionally, belongs to an operon involved in hypophosphite oxidation. Exact function not known. The protein is Putative C-P lyase subunit protein HtxH (htxH) of Stutzerimonas stutzeri (Pseudomonas stutzeri).